We begin with the raw amino-acid sequence, 151 residues long: Small ribosomal subunit protein bS6 (151 aa).

Residues 96–151 form a disordered region; that stretch reads HEEGQSAMLTRRDDRRERDGDDRPRRREGGFDRGDRGDRGDRGPRRPRDNEAGEGA.

It belongs to the bacterial ribosomal protein bS6 family.

In terms of biological role, binds together with bS18 to 16S ribosomal RNA. The polypeptide is Small ribosomal subunit protein bS6 (Brucella anthropi (strain ATCC 49188 / DSM 6882 / CCUG 24695 / JCM 21032 / LMG 3331 / NBRC 15819 / NCTC 12168 / Alc 37) (Ochrobactrum anthropi)).